A 290-amino-acid polypeptide reads, in one-letter code: 4-hydroxybenzoate octaprenyltransferase (290 aa).

Transmembrane regions (helical) follow at residues 20–40, 43–63, 92–112, 114–131, 135–155, 160–180, 209–229, 231–251, and 266–286; these read IGILLLLWPTLWGLWLAAEGV, LDILLIFVLGTVLMRSAGCVV, EALLLAAGLSLVAFLLIQPLN, LTIELSFVALFLAASYPF, FFAMPQAYLGIAFSFGIPMAF, GEVPFPAWFLMGANLLWVIAY, VVGVVLCHMAFLAGMVAIGLL, NLGVIYYIGLATALGLILYQY, and FLHNNWVGATIFAGIVLDYLV.

It belongs to the UbiA prenyltransferase family. Requires Mg(2+) as cofactor.

It localises to the cell inner membrane. It carries out the reaction all-trans-octaprenyl diphosphate + 4-hydroxybenzoate = 4-hydroxy-3-(all-trans-octaprenyl)benzoate + diphosphate. It functions in the pathway cofactor biosynthesis; ubiquinone biosynthesis. In terms of biological role, catalyzes the prenylation of para-hydroxybenzoate (PHB) with an all-trans polyprenyl group. Mediates the second step in the final reaction sequence of ubiquinone-8 (UQ-8) biosynthesis, which is the condensation of the polyisoprenoid side chain with PHB, generating the first membrane-bound Q intermediate 3-octaprenyl-4-hydroxybenzoate. In Nitrosospira multiformis (strain ATCC 25196 / NCIMB 11849 / C 71), this protein is 4-hydroxybenzoate octaprenyltransferase.